Consider the following 528-residue polypeptide: Low affinity inorganic phosphate transporter 4 (528 aa).

The Cytoplasmic portion of the chain corresponds to 1-18; sequence MALEVLEALDSARTQWYH. The chain crosses the membrane as a helical span at residues 19-39; that stretch reads VTAIVIAGMGFFTDAYDLFCI. Over 40–68 the chain is Extracellular; that stretch reads TTVSKLLGRLYYFDPSTGKPGKLPNNVNN. The helical transmembrane segment at 69-89 threads the bilayer; sequence LVTGVALVGTLSGQLFFGYLG. The Cytoplasmic portion of the chain corresponds to 90-96; that stretch reads DKLGRKK. Residues 97–117 traverse the membrane as a helical segment; it reads VYGVTLILMVACAICSGLSFG. The Extracellular portion of the chain corresponds to 118–122; sequence ASAKS. Residues 123–143 traverse the membrane as a helical segment; that stretch reads VMGTLCFFRFWLGFGIGGDYP. Residues 144 to 158 are Cytoplasmic-facing; sequence LSATIMSEYANKRTR. The chain crosses the membrane as a helical span at residues 159–179; that stretch reads GAFIAAVFAMQGVGIIFAGLV. Residues 180–208 lie on the Extracellular side of the membrane; the sequence is SMCLSAGFKASYHAPSFHDDPIMSTQPQG. The chain crosses the membrane as a helical span at residues 209 to 229; that stretch reads DLMWRLVLMIGAVPAAMTYYW. Residues 230-292 lie on the Cytoplasmic side of the membrane; the sequence is RMKMPETGRY…NEFFTRHGRH (63 aa). Residues 293–313 traverse the membrane as a helical segment; it reads LIGTMTSWFLLDIAFYSQNLT. The Extracellular portion of the chain corresponds to 314–341; it reads QKDIFPAMGLIDKDFEMNAIQEVFETSR. Residues 342 to 362 form a helical membrane-spanning segment; that stretch reads AMFVIALFGTFPGYWFTVFFI. Residues 363-371 are Cytoplasmic-facing; that stretch reads EKLGRYKIQ. A helical membrane pass occupies residues 372–392; that stretch reads LIGFFMMSVFMFIIGVKYDYL. Topologically, residues 393–401 are extracellular; it reads RNENSHMFA. Residues 402 to 422 form a helical membrane-spanning segment; sequence LLYGLTFFFANFGPNSTTFVL. The Cytoplasmic segment spans residues 423 to 433; it reads PAELFPTRVRS. Residues 434–454 form a helical membrane-spanning segment; the sequence is TCHALSAAAGKAGAMVGAFGI. Topologically, residues 455–467 are extracellular; the sequence is QNYTQKGEQKQIK. A glycan (N-linked (GlcNAc...) asparagine) is linked at Asn456. Residues 468-488 traverse the membrane as a helical segment; that stretch reads HAMMILAVTNLIGFFCSFLVT. The Cytoplasmic portion of the chain corresponds to 489–528; that stretch reads ETKGRSLEEISGEDGRESELTPTPPNNRVPTRQEPRSETM. 2 stretches are compositionally biased toward basic and acidic residues: residues 496–507 and 519–528; these read EEISGEDGRESE and TRQEPRSETM. The segment at 496 to 528 is disordered; sequence EEISGEDGRESELTPTPPNNRVPTRQEPRSETM.

Belongs to the major facilitator superfamily. Phosphate:H(+) symporter (TC 2.A.1.9) family. Expressed only in mycorrhizal roots, exclusively in cortical cells containing arbuscules, upon arbuscular mycorrhizal (AM) symbiosis with AM fungi (e.g. Gigaspora margarita and Funnelliformis mosseae). Also observed in root tips of non-mycorrhizal roots, in a phosphate (Pi) depended-manner, highest expression levels being observed in low Pi conditions.

It localises to the cell membrane. It carries out the reaction phosphate(in) + H(+)(in) = phosphate(out) + H(+)(out). Its function is as follows. Low-affinity transporter for external inorganic phosphate (Pi) probably involved in the acquisition of phosphate released by arbuscular mycorrhizal (AM) fungi (e.g. Gigaspora margarita and Funnelliformis mosseae) during AM symbiosis; required for propper mycorrhizal arbuscule morphology. Acts as a Pi-sensing machinery at the root tip level, independently of AM fungi, involved in the regulation of early root branching and lateral roots formation. The protein is Low affinity inorganic phosphate transporter 4 of Lotus japonicus (Lotus corniculatus var. japonicus).